Consider the following 92-residue polypeptide: MASQQGQQTRKIPEQEKKDLDQRAAKGETVVPGGTRGKSLEAQERLAEGRSKGGQTRKDQLGTEGYKEMGKKGGQTTGDKSAGEREEEEEED.

Positions 1–10 are enriched in polar residues; the sequence is MASQQGQQTR. The interval 1–92 is disordered; the sequence is MASQQGQQTR…GEREEEEEED (92 aa). Basic and acidic residues-rich tracts occupy residues 11–26 and 38–71; these read KIPE…RAAK and KSLE…EMGK.

The protein belongs to the small hydrophilic plant seed protein family. In terms of tissue distribution, maximally expressed in dry seeds. Also present in mid-maturation embryos.

Its function is as follows. LEA proteins are late embryonic proteins abundant in higher plant seed embryos. They may play an essential role in seed survival and in controlling water exchanges during seed desiccation and imbibition. In Helianthus annuus (Common sunflower), this protein is 10 kDa late embryogenesis abundant protein.